The following is a 407-amino-acid chain: Large ribosomal subunit protein uL3-like (407 aa).

The span at 1-31 (MSHRKFSAPRHGHLGFLPHKRSRRHRGKVKS) shows a compositional bias: basic residues. The tract at residues 1–37 (MSHRKFSAPRHGHLGFLPHKRSRRHRGKVKSWPRDDP) is disordered.

This sequence belongs to the universal ribosomal protein uL3 family. Component of the large ribosomal subunit (LSU). Part of a LSU subcomplex, the 5S RNP which is composed of the 5S RNA, RPL5 and RPL11. Interacts with NVL in an ATP-dependent manner. Interacts with RRP1B. Interacts with IPO5, IPO7 and KPNB1; these interactions may be involved in RPL5 nuclear import for the assembly of ribosomal subunits. Interacts with RRP1B. As to expression, expression is restricted to striated muscles.

Functionally, heart- and skeletal muscle-specific component of the ribosome, which regulates muscle function. Component of the large ribosomal subunit in striated muscle cells: replaces the RPL3 paralog in the ribosome in these cells. The ribosome is a large ribonucleoprotein complex responsible for the synthesis of proteins in the cell. Inhibits myotube growth and muscle function. This chain is Large ribosomal subunit protein uL3-like, found in Mus musculus (Mouse).